The sequence spans 77 residues: Apelin (77 aa).

Residues 1-22 (MNLRRCVQALLLLWLCLSAVCG) form the signal peptide. Residues 23 to 41 (GPLLQTSDGKEMEEGTIRY) constitute a propeptide that is removed on maturation. The interval 43-77 (VQPRGPRSGPGPWQGGRRKFRRQRPRLSHKGPMPF) is disordered. A compositionally biased stretch (basic residues) spans 58–71 (GRRKFRRQRPRLSH). A Pyrrolidone carboxylic acid modification is found at glutamine 65.

The protein belongs to the apelin family. At least 5 active peptides may be produced by proteolytic processing of the peptide precursor.

It is found in the secreted. Its subcellular location is the extracellular space. Its function is as follows. Peptide hormone that functions as endogenous ligand for the G-protein-coupled apelin receptor (APLNR/APJ), that plays a role in cadiovascular homeostasis. Functions as a balanced agonist activating both G(i) protein pathway and beta-arrestin pathway of APLNR. Downstream G proteins activation, apelin can inhibit cAMP production and activate key intracellular effectors such as ERKs. On the other hand, APLNR activation induces beta-arrestin recruitment to the membrane leading to desensitization and internalization of the receptor. Apelin blunts cardiac hypertrophic induction from APLNR on response to pathological stimuli, but also induces myocardial hypertrophy under normal conditions. Apelin-36 dissociates more hardly than (pyroglu)apelin-13 from APLNR. Involved in the regulation of cardiac precursor cell movements during gastrulation and heart morphogenesis. Has an inhibitory effect on cytokine production in response to T-cell receptor/CD3 cross-linking; the oral intake of apelin in the colostrum and the milk might therefore modulate immune responses in neonates. Plays a role in early coronary blood vessels formation. Mediates myocardial contractility in an ERK1/2-dependent manner. May also have a role in the central control of body fluid homeostasis by influencing vasopressin release and drinking behavior. This is Apelin (APLN) from Bos taurus (Bovine).